The sequence spans 199 residues: Adult-specific cuticular protein ACP-22 (199 aa).

The first 19 residues, 1–19, serve as a signal peptide directing secretion; sequence MRLFIILSVASFGAIGVLS. A disordered region spans residues 63–103; that stretch reads GGGGGGGGEGEEGREHELRGGGLELGGGGGGGGGGGGGGGE. Gly residues predominate over residues 82–102; the sequence is GGGLELGGGGGGGGGGGGGGG. The Chitin-binding type R&amp;R domain occupies 133–199; it reads HPEYHSDYHV…IARVSYRKHH (67 aa).

In terms of tissue distribution, epidermal regions synthesizing hard cuticle.

Functionally, cuticular proteins play a significant role in determining the physical properties of cuticles. The chain is Adult-specific cuticular protein ACP-22 (ACP22) from Tenebrio molitor (Yellow mealworm beetle).